The primary structure comprises 282 residues: Transcription factor BC1 (282 aa).

A disordered region spans residues 34–123 (TTAPAIPEDA…ATDSHSLAER (90 aa)). The segment covering 45–55 (METSSVVLDTS) has biased composition (polar residues). Over residues 75–84 (HSKEAKENGR) the composition is skewed to basic and acidic residues. Residues 109–116 (ARRGQATD) carry the Nuclear localization signal motif. A basic motif; degenerate region spans residues 113-126 (QATDSHSLAERVRR). In terms of domain architecture, bHLH spans 113 to 163 (QATDSHSLAERVRRERISERMRMLQALVPGCDKVTGKALILDEIINYVQSL). A helix-loop-helix motif region spans residues 127 to 163 (ERISERMRMLQALVPGCDKVTGKALILDEIINYVQSL). Positions 219–251 (PAQSHAIMDTSNTSPTPYTLQVQGGSNNNSLSQ) are disordered.

It belongs to the bHLH protein family. As to quaternary structure, homodimer. Component of a nuclear cell elongation controlling complex made of ILI5/BUL1, LO9-177 and BC1. Interacts with ILI5/BUL1 only in the presence of LO9-177. Interacts with IBH1. Binds to LO9-177 in the nucleus. Interacts with BCL1. Preferentially present in anthers and leaves lamina joints. Expressed in seedlings, leaves sheaths, collars and panicles.

The protein localises to the nucleus. Transcription activator that contributes, together with LO9-177 and ILI5/BUL1, to the promotion of leaf inclination and grain size by modulating cell elongation. Involved in the RLI1-dependent modulation of leaf inclination by promoting lamina joint cell elongation, especially in response to phosphate (Pi) availability. The sequence is that of Transcription factor BC1 from Oryza sativa subsp. japonica (Rice).